A 477-amino-acid chain; its full sequence is Diacylglycerol O-acyltransferase 1-2 (477 aa).

The tract at residues M1–Q48 is disordered. Positions G12–R21 are enriched in basic and acidic residues. Residues R25–Q40 are compositionally biased toward low complexity. 7 helical membrane-spanning segments follow: residues H79–I99, W123–E143, V155–I175, V182–F202, N230–Y250, G263–I283, and V319–L339. Positions F346 to N352 match the FYXDWWN motif motif. 3 helical membrane-spanning segments follow: residues G387–V407, C409–L429, and V442–L462. Residue H401 is part of the active site.

It belongs to the membrane-bound acyltransferase family. Sterol o-acyltransferase subfamily.

It is found in the endoplasmic reticulum membrane. It carries out the reaction an acyl-CoA + a 1,2-diacyl-sn-glycerol = a triacyl-sn-glycerol + CoA. The protein operates within glycerolipid metabolism; triacylglycerol biosynthesis. Its function is as follows. Involved in triacylglycerol (TAG) synthesis. Catalyzes the acylation of the sn-3 hydroxy group of sn-1,2-diacylglycerol using acyl-CoA. This is Diacylglycerol O-acyltransferase 1-2 from Oryza sativa subsp. japonica (Rice).